We begin with the raw amino-acid sequence, 281 residues long: Pantothenate synthetase (281 aa).

ATP is bound at residue 17-24 (MGFLHEGH). Histidine 24 serves as the catalytic Proton donor. Glutamine 48 lines the (R)-pantoate pocket. Residue glutamine 48 coordinates beta-alanine. 134–137 (GEKD) lines the ATP pocket. Glutamine 140 lines the (R)-pantoate pocket. ATP-binding positions include valine 163 and 176–179 (LSSR).

Belongs to the pantothenate synthetase family. As to quaternary structure, homodimer.

The protein localises to the cytoplasm. It carries out the reaction (R)-pantoate + beta-alanine + ATP = (R)-pantothenate + AMP + diphosphate + H(+). It functions in the pathway cofactor biosynthesis; (R)-pantothenate biosynthesis; (R)-pantothenate from (R)-pantoate and beta-alanine: step 1/1. Catalyzes the condensation of pantoate with beta-alanine in an ATP-dependent reaction via a pantoyl-adenylate intermediate. In Deinococcus radiodurans (strain ATCC 13939 / DSM 20539 / JCM 16871 / CCUG 27074 / LMG 4051 / NBRC 15346 / NCIMB 9279 / VKM B-1422 / R1), this protein is Pantothenate synthetase.